The sequence spans 321 residues: CPX chromosomal region candidate gene 1 protein homolog (321 aa).

Positions 1–83 (MSSPTKEGSD…TEIQKDQREE (83 aa)) are disordered. 2 stretches are compositionally biased toward polar residues: residues 21-32 (NEPSNDCTTDIE) and 44-60 (VETN…TSQE).

This is CPX chromosomal region candidate gene 1 protein homolog (CPXCR1) from Macaca fascicularis (Crab-eating macaque).